The following is a 630-amino-acid chain: ATP-dependent RNA helicase mrh4, mitochondrial (630 aa).

A mitochondrion-targeting transit peptide spans 1–46 (MNRLGGLSLPLRPVCLFCRAQTSLALSPLQGGQAVRSIATGRLRRR). A disordered region spans residues 46–108 (RARMTLSKDV…GETEEKPAMN (63 aa)). Residues 167-174 (DAVPTPIQ) carry the Q motif motif. One can recognise a Helicase ATP-binding domain in the interval 195–407 (DDDEPQYEQY…RKLYPDIWRL (213 aa)). An ATP-binding site is contributed by 208–215 (AETGSGKT). Residues 235-255 (EMEKKEEERKVREREENKKNQ) show a composition bias toward basic and acidic residues. Residues 235–265 (EMEKKEEERKVREREENKKNQAFDLEPEIPP) form a disordered region. Positions 354–357 (DEAD) match the DEAD box motif. The Helicase C-terminal domain maps to 452–630 (GSDEAGSPWS…VREVWFGLDS (179 aa)).

It belongs to the DEAD box helicase family. MRH4 subfamily.

It localises to the mitochondrion. The enzyme catalyses ATP + H2O = ADP + phosphate + H(+). ATP-binding RNA helicase involved in mitochondrial RNA metabolism. Required for maintenance of mitochondrial DNA. The polypeptide is ATP-dependent RNA helicase mrh4, mitochondrial (mrh4) (Emericella nidulans (strain FGSC A4 / ATCC 38163 / CBS 112.46 / NRRL 194 / M139) (Aspergillus nidulans)).